The chain runs to 531 residues: Peptide chain release factor 3 (531 aa).

The tr-type G domain maps to 13–282; the sequence is AKRRTFAIIS…TLIEHAPPPK (270 aa). Residues 22-29, 90-94, and 144-147 contribute to the GTP site; these read SHPDAGKT, DTPGH, and NKLD.

This sequence belongs to the TRAFAC class translation factor GTPase superfamily. Classic translation factor GTPase family. PrfC subfamily.

The protein resides in the cytoplasm. In terms of biological role, increases the formation of ribosomal termination complexes and stimulates activities of RF-1 and RF-2. It binds guanine nucleotides and has strong preference for UGA stop codons. It may interact directly with the ribosome. The stimulation of RF-1 and RF-2 is significantly reduced by GTP and GDP, but not by GMP. The protein is Peptide chain release factor 3 of Psychrobacter sp. (strain PRwf-1).